Reading from the N-terminus, the 492-residue chain is MDPNILWQARNDGSALQEEDIQQLRSSIRGTVVLKNEASEEEYNAAVTRWNNVSIRLATLVVYVEDEQDIVKCVEFVNKHYLDVAVCSHGRHSYHGASSSTGMVIDLGRMRRVSVDKEAMTVTAQGGCIARDVELPLEAEGLATVFGAVNETGIGGLTLGGGVGFLTGAHGLAADNLVSARMVLANGQVVTASDDENSDLFWAIRGAGPNFGIVTEFKYRVHKQGPVFWQMLFYSPDKLKDCVSIVNQMHNISLAQKGGDFQVMMAYLTPPGYPDLHPGLRIFYNGPEEKAKELAAPAYALGPLSVSGGMCNFSDTTRIPPYLEFEGFDRYAASSAHLDYPLDENLLLEVFTMFRNVIHKYGHHLLHPSKCILDLRNYEKVASVPIDATAYSGRFDVAWMIPDLQWDDPAMDSTMRMEVTSITAHIRERVREAKGGHVNGPRDATAIYPNISAGGEEKAKSVFGPNLPRLQVLKRKYDPDFIWNKWFPIVPA.

The FAD-binding PCMH-type domain occupies 54–224 (SIRLATLVVY…TEFKYRVHKQ (171 aa)).

Belongs to the oxygen-dependent FAD-linked oxidoreductase family. The cofactor is FAD.

It participates in pigment biosynthesis. Its pathway is secondary metabolite biosynthesis. Its function is as follows. FAD-linked oxidoreductase; part of the gene cluster that mediates the biosynthesis of pleosporalin A, ascomycone A, as well as a third cryptic naphthoquinone derived pigment, all responsible for the coloration of conidia. Essential for the production of pleosporalin A, but not the 2 other final products. The pathway begins with the biosynthesis of the cyclized heptaketide 3-acetonyl-1,6,8-trihydroxy-2-naphthaldehyde by the NR-PKS pgmA. The C-6 hydroxyl group is further methylated by the O-methyltransferase pgmB to yield fusarubinaldehyde which is in turn oxidized by the cytochrome P450 monooxygenase pgmC at C-9. The C-1 hydroxyl group is then methylated spontaneously. Although pgmE, pgmD and pgmH are essential for the production of pleosporalin A, it is not the case for the 2 other final products and it remains difficult to assign a specific function to each enzyme. PgmF and pgmG seem not to be involved in pigment biosynthesis although they were regulated by the cluster-specific transcription factor pgmR. The chain is FAD-linked oxidoreductase pgmH from Aspergillus terreus.